The sequence spans 705 residues: Calpain-1 catalytic subunit (705 aa).

Residues 48-347 (LFRDPQFPAG…FSRLEICNLT (300 aa)) enclose the Calpain catalytic domain. Catalysis depends on residues Cys-108, His-265, and Asn-289. A domain III region spans residues 348–517 (PDALTKDELS…KQSDTAELDE (170 aa)). Residues 518–533 (EISADLADEEEITEDD) are linker. Residues 530-565 (TEDDIEDGFKNMFQQLAGEDMEISVFELKTILNRVI) enclose the EF-hand 1 domain. The segment at 534–704 (IEDGFKNMFQ…LAEWLLLTMC (171 aa)) is domain IV. Residues Asp-549, Glu-551, Glu-556, Asp-589, Asp-591, Ser-593, Arg-595, Glu-600, Asp-619, Asp-621, Ser-623, Thr-625, and Glu-630 each contribute to the Ca(2+) site. 2 consecutive EF-hand domains span residues 606-641 (NKIR…AGFK) and 671-705 (VKLE…TMCG).

Belongs to the peptidase C2 family. Heterodimer of large (catalytic) and a small (regulatory) subunit. It depends on Ca(2+) as a cofactor. The N-terminus is blocked. Ubiquitously expressed.

The protein resides in the cytoplasm. It localises to the cell membrane. It catalyses the reaction Broad endopeptidase specificity.. With respect to regulation, activated by micromolar concentrations of calcium and inhibited by calpastatin. Calcium-regulated non-lysosomal thiol-protease which catalyze limited proteolysis of substrates involved in cytoskeletal remodeling and signal transduction. The protein is Calpain-1 catalytic subunit of Gallus gallus (Chicken).